A 126-amino-acid chain; its full sequence is UPF0538 protein C2orf76 homolog (126 aa).

This sequence belongs to the UPF0538 family.

The chain is UPF0538 protein C2orf76 homolog from Xenopus tropicalis (Western clawed frog).